Here is a 239-residue protein sequence, read N- to C-terminus: Ribonuclease PH (239 aa).

Phosphate contacts are provided by residues R86 and 124-126 (GTR).

Belongs to the RNase PH family. As to quaternary structure, homohexameric ring arranged as a trimer of dimers.

It catalyses the reaction tRNA(n+1) + phosphate = tRNA(n) + a ribonucleoside 5'-diphosphate. In terms of biological role, phosphorolytic 3'-5' exoribonuclease that plays an important role in tRNA 3'-end maturation. Removes nucleotide residues following the 3'-CCA terminus of tRNAs; can also add nucleotides to the ends of RNA molecules by using nucleoside diphosphates as substrates, but this may not be physiologically important. Probably plays a role in initiation of 16S rRNA degradation (leading to ribosome degradation) during starvation. The sequence is that of Ribonuclease PH from Rickettsia felis (strain ATCC VR-1525 / URRWXCal2) (Rickettsia azadi).